The primary structure comprises 639 residues: Extracellular metalloproteinase NpIII (639 aa).

Positions 1–16 (MHMLLFIGALALPVFV) are cleaved as a signal peptide. Residues 17 to 245 (CTQSCEPASL…IHGVVDYVSE (229 aa)) constitute a propeptide that is removed on maturation. 4 N-linked (GlcNAc...) asparagine glycosylation sites follow: Asn-287, Asn-320, Asn-336, and Asn-368. His-429 contacts Zn(2+). Glu-430 is a catalytic residue. His-433 contributes to the Zn(2+) binding site. Asn-509 carries N-linked (GlcNAc...) asparagine glycosylation.

The protein belongs to the peptidase M36 family. It depends on Zn(2+) as a cofactor.

The protein localises to the secreted. Its function is as follows. Secreted metalloproteinase that allows assimilation of proteinaceous substrates. The protein is Extracellular metalloproteinase NpIII (NpIII) of Aspergillus oryzae (strain ATCC 42149 / RIB 40) (Yellow koji mold).